A 418-amino-acid chain; its full sequence is tRNA-2-methylthio-N(6)-dimethylallyladenosine synthase (418 aa).

Residues 1 to 118 enclose the MTTase N-terminal domain; that stretch reads MNYLIETIGC…ALKIMNLFRT (118 aa). 6 residues coordinate [4Fe-4S] cluster: cysteine 10, cysteine 46, cysteine 80, cysteine 143, cysteine 147, and cysteine 150. The 228-residue stretch at 129-356 folds into the Radical SAM core domain; it reads IKSKIVRYIT…LKESNKISIE (228 aa). Residues 359–418 form the TRAM domain; sequence SEMLGSTQQVLAEEIKNGIIKARTKNGRKVFAEGRKEYIGKHINVNIKEAKINSLFGDIV.

Belongs to the methylthiotransferase family. MiaB subfamily. As to quaternary structure, monomer. The cofactor is [4Fe-4S] cluster.

It is found in the cytoplasm. It carries out the reaction N(6)-dimethylallyladenosine(37) in tRNA + (sulfur carrier)-SH + AH2 + 2 S-adenosyl-L-methionine = 2-methylsulfanyl-N(6)-dimethylallyladenosine(37) in tRNA + (sulfur carrier)-H + 5'-deoxyadenosine + L-methionine + A + S-adenosyl-L-homocysteine + 2 H(+). Its function is as follows. Catalyzes the methylthiolation of N6-(dimethylallyl)adenosine (i(6)A), leading to the formation of 2-methylthio-N6-(dimethylallyl)adenosine (ms(2)i(6)A) at position 37 in tRNAs that read codons beginning with uridine. In Endomicrobium trichonymphae, this protein is tRNA-2-methylthio-N(6)-dimethylallyladenosine synthase.